The chain runs to 346 residues: Trans-enoyl reductase FFUJ_12240 (346 aa).

Position 40–43 (40–43 (HDAK)) interacts with NADP(+). 124–131 (LAIATAGL) contributes to the substrate binding site. NADP(+) is bound by residues 157 to 160 (ATAT), 180 to 183 (SPSN), tyrosine 198, and 245 to 246 (LE). Substrate is bound at residue 266 to 270 (APSIL). 335–336 (VH) is a binding site for NADP(+).

It belongs to the zinc-containing alcohol dehydrogenase family.

Its function is as follows. Trans-enoyl reductase; part of the gene cluster that mediates the biosynthesis of fujikurins A-D, secondary metabolites playing a role during rice infection. The polyketide synthase PKS19 acts with the trans-enoyl reductase FFUJ_12240 and the polyketide transferase FFUJ_12241 to produce fujikurins, however, the biosynthesis pathway has not been identified yet. In Gibberella fujikuroi (strain CBS 195.34 / IMI 58289 / NRRL A-6831) (Bakanae and foot rot disease fungus), this protein is Trans-enoyl reductase FFUJ_12240.